We begin with the raw amino-acid sequence, 324 residues long: Viral cathepsin (324 aa).

An N-terminal signal peptide occupies residues 1–16 (MNKIVLYLLVYGATLG). A propeptide spans 17 to 113 (AAYDLLKAPS…VVLDRPPDKG (97 aa)) (activation peptide). Intrachain disulfides connect Cys134–Cys175, Cys168–Cys208, and Cys263–Cys311. The active site involves Cys137. A glycan (N-linked (GlcNAc...) asparagine; by host) is linked at Asn159. Active-site residues include His270 and Asn290.

The protein belongs to the peptidase C1 family. In terms of processing, synthesized as an inactive proenzyme and activated by proteolytic removal of the inhibitory propeptide.

The catalysed reaction is Endopeptidase of broad specificity, hydrolyzing substrates of both cathepsin L and cathepsin B.. Functionally, cysteine protease that plays an essential role in host liquefaction to facilitate horizontal transmission of the virus. May participate in the degradation of foreign protein expressed by the baculovirus system. This Antheraea pernyi nuclear polyhedrosis virus (ApNPV) protein is Viral cathepsin (VCATH).